Consider the following 71-residue polypeptide: ATP synthase F(0) complex subunit e, mitochondrial (71 aa).

Position 34 is an N6-acetyllysine (K34). S68 bears the Phosphoserine mark.

It belongs to the ATPase e subunit family. In terms of assembly, component of the ATP synthase complex composed at least of ATP5F1A/subunit alpha, ATP5F1B/subunit beta, ATP5MC1/subunit c (homooctomer), MT-ATP6/subunit a, MT-ATP8/subunit 8, ATP5ME/subunit e, ATP5MF/subunit f, ATP5MG/subunit g, ATP5MK/subunit k, ATP5MJ/subunit j, ATP5F1C/subunit gamma, ATP5F1D/subunit delta, ATP5F1E/subunit epsilon, ATP5PF/subunit F6, ATP5PB/subunit b, ATP5PD/subunit d, ATP5PO/subunit OSCP. ATP synthase complex consists of a soluble F(1) head domain (subunits alpha(3) and beta(3)) - the catalytic core - and a membrane F(0) domain - the membrane proton channel (subunits c, a, 8, e, f, g, k and j). These two domains are linked by a central stalk (subunits gamma, delta, and epsilon) rotating inside the F1 region and a stationary peripheral stalk (subunits F6, b, d, and OSCP).

It localises to the mitochondrion. Its subcellular location is the mitochondrion inner membrane. Functionally, subunit e, of the mitochondrial membrane ATP synthase complex (F(1)F(0) ATP synthase or Complex V) that produces ATP from ADP in the presence of a proton gradient across the membrane which is generated by electron transport complexes of the respiratory chain. ATP synthase complex consist of a soluble F(1) head domain - the catalytic core - and a membrane F(1) domain - the membrane proton channel. These two domains are linked by a central stalk rotating inside the F(1) region and a stationary peripheral stalk. During catalysis, ATP synthesis in the catalytic domain of F(1) is coupled via a rotary mechanism of the central stalk subunits to proton translocation. In vivo, can only synthesize ATP although its ATP hydrolase activity can be activated artificially in vitro. Part of the complex F(0) domain. The protein is ATP synthase F(0) complex subunit e, mitochondrial of Pongo abelii (Sumatran orangutan).